A 482-amino-acid chain; its full sequence is Ribulose bisphosphate carboxylase large chain (482 aa).

Residues 1–2 (MS) constitute a propeptide that is removed on maturation. P3 carries the N-acetylproline modification. N6,N6,N6-trimethyllysine is present on K14. Substrate contacts are provided by N123 and T173. K175 functions as the Proton acceptor in the catalytic mechanism. K177 provides a ligand contact to substrate. Mg(2+) contacts are provided by K201, D203, and E204. At K201 the chain carries N6-carboxylysine. H294 acts as the Proton acceptor in catalysis. Residues R295, H327, and S379 each contribute to the substrate site.

The protein belongs to the RuBisCO large chain family. Type I subfamily. As to quaternary structure, heterohexadecamer of 8 large chains and 8 small chains; disulfide-linked. The disulfide link is formed within the large subunit homodimers. It depends on Mg(2+) as a cofactor. The disulfide bond which can form in the large chain dimeric partners within the hexadecamer appears to be associated with oxidative stress and protein turnover.

The protein localises to the plastid. It localises to the chloroplast. It catalyses the reaction 2 (2R)-3-phosphoglycerate + 2 H(+) = D-ribulose 1,5-bisphosphate + CO2 + H2O. It carries out the reaction D-ribulose 1,5-bisphosphate + O2 = 2-phosphoglycolate + (2R)-3-phosphoglycerate + 2 H(+). RuBisCO catalyzes two reactions: the carboxylation of D-ribulose 1,5-bisphosphate, the primary event in carbon dioxide fixation, as well as the oxidative fragmentation of the pentose substrate in the photorespiration process. Both reactions occur simultaneously and in competition at the same active site. This Stegnosperma halimifolium protein is Ribulose bisphosphate carboxylase large chain.